Consider the following 448-residue polypeptide: Signal recognition particle protein (448 aa).

GTP-binding positions include 101–108 (GLQGSGKT), 182–186 (DSAGR), and 240–243 (SKFD).

It belongs to the GTP-binding SRP family. SRP54 subfamily. Part of the signal recognition particle protein translocation system, which is composed of SRP and FtsY. SRP is a ribonucleoprotein composed of Ffh and a 4.5S RNA molecule.

It localises to the cytoplasm. The enzyme catalyses GTP + H2O = GDP + phosphate + H(+). Functionally, involved in targeting and insertion of nascent membrane proteins into the cytoplasmic membrane. Binds to the hydrophobic signal sequence of the ribosome-nascent chain (RNC) as it emerges from the ribosomes. The SRP-RNC complex is then targeted to the cytoplasmic membrane where it interacts with the SRP receptor FtsY. Interaction with FtsY leads to the transfer of the RNC complex to the Sec translocase for insertion into the membrane, the hydrolysis of GTP by both Ffh and FtsY, and the dissociation of the SRP-FtsY complex into the individual components. This chain is Signal recognition particle protein, found in Helicobacter pylori (strain ATCC 700392 / 26695) (Campylobacter pylori).